Here is a 156-residue protein sequence, read N- to C-terminus: Small ribosomal subunit protein uS7 (156 aa).

Belongs to the universal ribosomal protein uS7 family. Part of the 30S ribosomal subunit. Contacts proteins S9 and S11.

One of the primary rRNA binding proteins, it binds directly to 16S rRNA where it nucleates assembly of the head domain of the 30S subunit. Is located at the subunit interface close to the decoding center, probably blocks exit of the E-site tRNA. This Pseudomonas syringae pv. tomato (strain ATCC BAA-871 / DC3000) protein is Small ribosomal subunit protein uS7.